A 183-amino-acid chain; its full sequence is Ribosome maturation factor RimM (183 aa).

A PRC barrel domain is found at 104–183; sequence EGDYYWKDLM…TIEVDWDPGF (80 aa).

The protein belongs to the RimM family. As to quaternary structure, binds ribosomal protein uS19.

The protein resides in the cytoplasm. An accessory protein needed during the final step in the assembly of 30S ribosomal subunit, possibly for assembly of the head region. Essential for efficient processing of 16S rRNA. May be needed both before and after RbfA during the maturation of 16S rRNA. It has affinity for free ribosomal 30S subunits but not for 70S ribosomes. In Salmonella choleraesuis (strain SC-B67), this protein is Ribosome maturation factor RimM.